The chain runs to 529 residues: Lysine--tRNA ligase (529 aa).

A 'HIGH' region motif is present at residues 44 to 52 (PSGLPHIGT). The 'KMSKS' region motif lies at 290-294 (KISKS). Lys-293 contributes to the ATP binding site.

Belongs to the class-I aminoacyl-tRNA synthetase family.

The protein resides in the cytoplasm. The catalysed reaction is tRNA(Lys) + L-lysine + ATP = L-lysyl-tRNA(Lys) + AMP + diphosphate. This Rickettsia akari (strain Hartford) protein is Lysine--tRNA ligase.